Consider the following 712-residue polypeptide: Phosphomethylpyrimidine synthase (712 aa).

Positions 14-49 are disordered; sequence AIDITAPESTIPNKSKVPNKSAESSQSTVPKAPSRR. Residues 20-42 show a composition bias toward polar residues; that stretch reads PESTIPNKSKVPNKSAESSQSTV. Residues asparagine 283, methionine 312, tyrosine 341, histidine 377, 397–399, 438–441, and glutamate 477 contribute to the substrate site; these read SRG and DGMR. Histidine 481 contacts Zn(2+). Tyrosine 504 is a substrate binding site. Histidine 545 contributes to the Zn(2+) binding site. Positions 625, 628, and 633 each coordinate [4Fe-4S] cluster.

The protein belongs to the ThiC family. Homodimer. The cofactor is [4Fe-4S] cluster.

The enzyme catalyses 5-amino-1-(5-phospho-beta-D-ribosyl)imidazole + S-adenosyl-L-methionine = 4-amino-2-methyl-5-(phosphooxymethyl)pyrimidine + CO + 5'-deoxyadenosine + formate + L-methionine + 3 H(+). Its pathway is cofactor biosynthesis; thiamine diphosphate biosynthesis. Its function is as follows. Catalyzes the synthesis of the hydroxymethylpyrimidine phosphate (HMP-P) moiety of thiamine from aminoimidazole ribotide (AIR) in a radical S-adenosyl-L-methionine (SAM)-dependent reaction. The chain is Phosphomethylpyrimidine synthase from Shewanella putrefaciens (strain CN-32 / ATCC BAA-453).